We begin with the raw amino-acid sequence, 178 residues long: Putative type II secretion system M-type protein YghD (178 aa).

At 1–39 (MLRDKFIHYFQQWRERQLSRGEHWLAQHLAGRSPREKGM) the chain is on the cytoplasmic side. The chain crosses the membrane as a helical span at residues 40-60 (LLAAVVFLFSVGYYVLIWQPL). At 61–178 (SERIEQQETI…NVQRLEFGRG (118 aa)) the chain is on the periplasmic side.

The protein belongs to the GSP M family.

The protein localises to the cell inner membrane. Its function is as follows. Involved in a type II secretion system (T2SS, formerly general secretion pathway, GSP) for the export of folded proteins across the outer membrane. The chain is Putative type II secretion system M-type protein YghD (yghD) from Escherichia coli (strain K12).